A 466-amino-acid polypeptide reads, in one-letter code: Replication termination factor 1 (466 aa).

DNA-binding domain regions lie at residues 94–249 (RDYT…LRRK) and 250–421 (YNPF…KKTL). HTH myb-type domains are found at residues 251–304 (NPFK…QPGE) and 305–363 (INRS…SRDI). 2 consecutive DNA-binding regions (H-T-H motif) follow at residues 278 to 300 (WSLI…RDYI) and 336 to 359 (WSLI…YTLI).

It is found in the nucleus. In terms of biological role, mediates site-specific replication termination at the polar replication barrier RTS1, a barrier which ensures that replication of the mat1 locus in S.pombe occurs in the centromere-proximal direction. The polypeptide is Replication termination factor 1 (rtf1) (Schizosaccharomyces pombe (strain 972 / ATCC 24843) (Fission yeast)).